The chain runs to 108 residues: Thiosulfate sulfurtransferase GlpE (108 aa).

Residues 17–105 (QEKEAVLVDI…WQRQFPAEVA (89 aa)) enclose the Rhodanese domain. Catalysis depends on Cys-65, which acts as the Cysteine persulfide intermediate.

It belongs to the GlpE family.

It is found in the cytoplasm. It catalyses the reaction thiosulfate + hydrogen cyanide = thiocyanate + sulfite + 2 H(+). It carries out the reaction thiosulfate + [thioredoxin]-dithiol = [thioredoxin]-disulfide + hydrogen sulfide + sulfite + 2 H(+). Its function is as follows. Transferase that catalyzes the transfer of sulfur from thiosulfate to thiophilic acceptors such as cyanide or dithiols. May function in a CysM-independent thiosulfate assimilation pathway by catalyzing the conversion of thiosulfate to sulfite, which can then be used for L-cysteine biosynthesis. The protein is Thiosulfate sulfurtransferase GlpE of Escherichia coli O127:H6 (strain E2348/69 / EPEC).